A 311-amino-acid chain; its full sequence is MADVQAPTIGGAGRYAPSPSGDLHLGNLRTALLAWLFARASGRRFLLRVEDLDRVRPGAQQRQLADLRAIGLDWDGPVVCQSQRRTRYEAAITRLREAGLTYECYCTRREIQQAATAPHGPLGAYPGTCRDLSDADRAERRAQGRPAALRLRAERTDFEIVDQLHGRYRGPVDDVVLRRGDGLPAYNLAVVVDDAAQGVDQVVRGDDLLPSTPRQAYLATLLGLPVPAYAHVPLVLNKDGQRLAKRDGAVTLADQQRAGKSPEQVLALLTDSLGLPPRPPRELLADFDPARLPREPWILTDNGLLQPSECP.

L-glutamate-binding positions include 14-18 and glutamate 50; that span reads RYAPS. Residues 17 to 27 carry the 'HIGH' region motif; sequence PSPSGDLHLGN. Positions 104, 106, 125, and 129 each coordinate Zn(2+). L-glutamate-binding residues include tyrosine 186 and arginine 204. Positions 242 to 246 match the 'KMSKS' region motif; the sequence is RLAKR. Lysine 245 contributes to the ATP binding site.

Belongs to the class-I aminoacyl-tRNA synthetase family. GluQ subfamily. Requires Zn(2+) as cofactor.

Functionally, catalyzes the tRNA-independent activation of glutamate in presence of ATP and the subsequent transfer of glutamate onto a tRNA(Asp). Glutamate is transferred on the 2-amino-5-(4,5-dihydroxy-2-cyclopenten-1-yl) moiety of the queuosine in the wobble position of the QUC anticodon. The polypeptide is Glutamyl-Q tRNA(Asp) synthetase (Nocardia farcinica (strain IFM 10152)).